The primary structure comprises 603 residues: Penicillin-binding protein activator LpoA (603 aa).

An N-terminal signal peptide occupies residues 1-24 (MINHKRLSVPRILTPVALAITLAA). C25 carries the N-palmitoyl cysteine lipid modification. C25 is lipidated: S-diacylglycerol cysteine.

Belongs to the LpoA family. As to quaternary structure, interacts with PBP1a.

Its subcellular location is the cell outer membrane. Regulator of peptidoglycan synthesis that is essential for the function of penicillin-binding protein 1A (PBP1a). This chain is Penicillin-binding protein activator LpoA, found in Vibrio antiquarius (strain Ex25).